A 209-amino-acid polypeptide reads, in one-letter code: Orotate phosphoribosyltransferase (209 aa).

5-phospho-alpha-D-ribose 1-diphosphate-binding positions include arginine 96, lysine 100, histidine 102, and 122–130 (EDLISTGGS). Residue serine 126 coordinates orotate.

The protein belongs to the purine/pyrimidine phosphoribosyltransferase family. PyrE subfamily. In terms of assembly, homodimer. Requires Mg(2+) as cofactor.

The enzyme catalyses orotidine 5'-phosphate + diphosphate = orotate + 5-phospho-alpha-D-ribose 1-diphosphate. Its pathway is pyrimidine metabolism; UMP biosynthesis via de novo pathway; UMP from orotate: step 1/2. In terms of biological role, catalyzes the transfer of a ribosyl phosphate group from 5-phosphoribose 1-diphosphate to orotate, leading to the formation of orotidine monophosphate (OMP). The chain is Orotate phosphoribosyltransferase from Listeria monocytogenes serotype 4b (strain F2365).